We begin with the raw amino-acid sequence, 151 residues long: Transcriptional repressor NrdR (151 aa).

A zinc finger spans residues 3–34; it reads CPYCAYGESKVVDSRSTEDGSSIRRRRECLKC. The ATP-cone domain occupies 49-139; that stretch reads ILVIKKNMSR…VYRQFKDINT (91 aa).

The protein belongs to the NrdR family. It depends on Zn(2+) as a cofactor.

Functionally, negatively regulates transcription of bacterial ribonucleotide reductase nrd genes and operons by binding to NrdR-boxes. This is Transcriptional repressor NrdR from Clostridium botulinum (strain Loch Maree / Type A3).